We begin with the raw amino-acid sequence, 941 residues long: MSDHSTFADRHIGLDSQAVATMLAVIGVDSLDDLAVKAVPAGILDTLTDTGAAPGLDSLPPAASEAEALAELRALADANTVAVSMIGQGYYDTHTPPVLLRNIIENPAWYTAYTPYQPEISQGRLEALLNFQTLVTDLTGLEIANASMLDEGTAAAEAMTLMHRAARGPVKRVVVDADVFTQTAAVLATRAKPLGIEIVTADLRAGLPDGEFFGVIAQLPGASGRITDWSALVQQAHDRGALVAVGADLLALTLIAPPGEIGADVAFGTTQRFGVPMGFGGPHAGYLAVHAKHARQLPGRLVGVSVDSDGTPAYRLALQTREQHIRRDKATSNICTAQVLLAVLAAMYASYHGAGGLTAIARRVHAHAEAIAGALGDALVHDKYFDTVLARVPGRADEVLARAKANGINLWRVDADHVSVACDEATTDTHVAVVLDAFGVAAAAPAHTDIATRTSEFLTHPAFTQYRTETSMMRYLRALADKDIALDRSMIPLGSCTMKLNAAAEMESITWPEFGRQHPFAPASDTAGLRQLVADLQSWLVLITGYDAVSLQPNAGSQGEYAGLLAIHEYHASRGEPHRDICLIPSSAHGTNAASAALAGMRVVVVDCHDNGDVDLDDLRAKVGEHAERLSALMITYPSTHGVYEHDIAEICAAVHDAGGQVYVDGANLNALVGLARPGKFGGDVSHLNLHKTFCIPHGGGGPGVGPVAVRAHLAPFLPGHPFAPELPKGYPVSSAPYGSASILPITWAYIRMMGAEGLRAASLTAITSANYIARRLDEYYPVLYTGENGMVAHECILDLRGITKLTGITVDDVAKRLADYGFHAPTMSFPVAGTLMVEPTESESLAEVDAFCEAMIGIRAEIDKVGAGEWPVDDNPLRGAPHTAQCLLASDWDHPYTREQAAYPLGTAFRPKVWPAVRRIDGAYGDRNLVCSCPPVEAFA.

Lys692 carries the post-translational modification N6-(pyridoxal phosphate)lysine.

The protein belongs to the GcvP family. The glycine cleavage system is composed of four proteins: P, T, L and H. It depends on pyridoxal 5'-phosphate as a cofactor.

The enzyme catalyses N(6)-[(R)-lipoyl]-L-lysyl-[glycine-cleavage complex H protein] + glycine + H(+) = N(6)-[(R)-S(8)-aminomethyldihydrolipoyl]-L-lysyl-[glycine-cleavage complex H protein] + CO2. Its function is as follows. The glycine cleavage system catalyzes the degradation of glycine. The P protein binds the alpha-amino group of glycine through its pyridoxal phosphate cofactor; CO(2) is released and the remaining methylamine moiety is then transferred to the lipoamide cofactor of the H protein. This Mycobacterium tuberculosis (strain ATCC 25177 / H37Ra) protein is Glycine dehydrogenase (decarboxylating).